The following is a 474-amino-acid chain: 6-phospho-beta-galactosidase (474 aa).

D-galactose 6-phosphate contacts are provided by glutamine 19, histidine 116, asparagine 159, glutamate 160, and asparagine 297. Glutamate 160 acts as the Proton donor in catalysis. The Nucleophile role is filled by glutamate 375. Residues serine 433, tryptophan 434, lysine 440, and tyrosine 442 each coordinate D-galactose 6-phosphate.

It belongs to the glycosyl hydrolase 1 family.

It catalyses the reaction a 6-phospho-beta-D-galactoside + H2O = D-galactose 6-phosphate + an alcohol. Its pathway is carbohydrate metabolism; lactose degradation; D-galactose 6-phosphate and beta-D-glucose from lactose 6-phosphate: step 1/1. The chain is 6-phospho-beta-galactosidase from Lacticaseibacillus casei (Lactobacillus casei).